The following is a 164-amino-acid chain: Ubiquitin-fold modifier-conjugating enzyme 1 (164 aa).

Cysteine 116 acts as the Glycyl thioester intermediate in catalysis.

Belongs to the ubiquitin-conjugating enzyme family. UFC1 subfamily.

In terms of biological role, E2-like enzyme which forms an intermediate with UFM1 via a thioester linkage. In Drosophila sechellia (Fruit fly), this protein is Ubiquitin-fold modifier-conjugating enzyme 1.